A 461-amino-acid polypeptide reads, in one-letter code: Kynureninase (461 aa).

Pyridoxal 5'-phosphate is bound by residues Leu-114, Thr-115, 142 to 145, Asp-228, His-231, and Tyr-253; that span reads FPSD. Lys-254 is modified (N6-(pyridoxal phosphate)lysine). Pyridoxal 5'-phosphate is bound by residues Trp-288 and Asn-316.

The protein belongs to the kynureninase family. In terms of assembly, homodimer. It depends on pyridoxal 5'-phosphate as a cofactor.

It localises to the cytoplasm. It carries out the reaction L-kynurenine + H2O = anthranilate + L-alanine + H(+). It catalyses the reaction 3-hydroxy-L-kynurenine + H2O = 3-hydroxyanthranilate + L-alanine + H(+). The protein operates within amino-acid degradation; L-kynurenine degradation; L-alanine and anthranilate from L-kynurenine: step 1/1. It functions in the pathway cofactor biosynthesis; NAD(+) biosynthesis; quinolinate from L-kynurenine: step 2/3. Functionally, catalyzes the cleavage of L-kynurenine (L-Kyn) and L-3-hydroxykynurenine (L-3OHKyn) into anthranilic acid (AA) and 3-hydroxyanthranilic acid (3-OHAA), respectively. The sequence is that of Kynureninase from Candida albicans (strain SC5314 / ATCC MYA-2876) (Yeast).